The chain runs to 215 residues: MKIFIDTANVEEIRKASKLGVLAGVTTNPSLIAKEGRDIKEVIEEICSIVDGPISAEVMALECDEMVREGRELAKIHKNIVIKIPMCEEGLKAVKVLASEGIRTNVTLIFSPLQALLAARAGASFVSPFLGRLDDIGNPGIEIVTQIAEMFALHGIDTEIISASVRNPMHVLDSAMAGSHIATIPYNVILQMVKHPLTDAGMKKFIEDYNKAFNK.

Lys83 (schiff-base intermediate with substrate) is an active-site residue.

Belongs to the transaldolase family. Type 3B subfamily.

Its subcellular location is the cytoplasm. It catalyses the reaction D-sedoheptulose 7-phosphate + D-glyceraldehyde 3-phosphate = D-erythrose 4-phosphate + beta-D-fructose 6-phosphate. It functions in the pathway carbohydrate degradation; pentose phosphate pathway; D-glyceraldehyde 3-phosphate and beta-D-fructose 6-phosphate from D-ribose 5-phosphate and D-xylulose 5-phosphate (non-oxidative stage): step 2/3. Functionally, transaldolase is important for the balance of metabolites in the pentose-phosphate pathway. The protein is Probable transaldolase of Clostridium perfringens (strain 13 / Type A).